The following is a 463-amino-acid chain: Phytase A (463 aa).

The signal sequence occupies residues 1–19 (MAFFTVALSLYYLLSRVST). N26 is a glycosylation site (N-linked (GlcNAc...) asparagine). C29 and C38 are joined by a disulfide. N41 carries N-linked (GlcNAc...) asparagine glycosylation. Residues Q48, Y49, R79, H80, R83, and T86 each coordinate 1D-myo-inositol hexakisphosphate. Intrachain disulfides connect C69-C410, C211-C460, C260-C278, and C431-C439. H80 serves as the catalytic Nucleophile. N-linked (GlcNAc...) asparagine glycans are attached at residues N103 and N118. R163 is a 1D-myo-inositol hexakisphosphate binding site. An N-linked (GlcNAc...) asparagine glycan is attached at N203. Residue D207 coordinates 1D-myo-inositol hexakisphosphate. Residue N226 is glycosylated (N-linked (GlcNAc...) asparagine). K297 is a 1D-myo-inositol hexakisphosphate binding site. 2 N-linked (GlcNAc...) asparagine glycosylation sites follow: N331 and N335. 1D-myo-inositol hexakisphosphate contacts are provided by H357 and D358. The N-linked (GlcNAc...) asparagine glycan is linked to N372.

This sequence belongs to the histidine acid phosphatase family. Monomer. In terms of processing, seems to be cleaved into at least two pieces, most likely due to proteases in the supernatant. The N-terminal fragment, called phyB seems to retain phytase activity.

It is found in the secreted. It carries out the reaction 1D-myo-inositol hexakisphosphate + H2O = 1D-myo-inositol 1,2,4,5,6-pentakisphosphate + phosphate. It catalyses the reaction 1D-myo-inositol 1,2,4,5,6-pentakisphosphate + H2O = 1D-myo-inositol 1,2,5,6-tetrakisphosphate + phosphate. The catalysed reaction is 1D-myo-inositol 1,2,5,6-tetrakisphosphate + H2O = 1D-myo-inositol 1,2,6-trisphosphate + phosphate. The enzyme catalyses 1D-myo-inositol 1,2,6-trisphosphate + H2O = 1D-myo-inositol 1,2-bisphosphate + phosphate. It carries out the reaction 1D-myo-inositol 1,2-bisphosphate + H2O = 1D-myo-inositol 2-phosphate + phosphate. Its function is as follows. Catalyzes the phosphate monoester hydrolysis of phytic acid (myo-inositol hexakisphosphate), which results in the stepwise formation of myo-inositol pentakis-, tetrakis-, tris-, bis-, and monophosphates, as well as the liberation of inorganic phosphate. Myo-inositol 2-monophosphate is the end product. Has a broad substrate specificity and is also able to dephosphorylate other classic acid phosphatase substrates such as p-nitrophenyl phosphate, phenyl phosphate, fructose 1,6-bisphosphate, fructose 6-phosphate, glucose 6-phosphate, ribose 5-phosphate, alpha-glycerophosphate, beta-glycerophosphate, 3-phosphoglycerate, as well as ADP and ATP. This Emericella nidulans (strain FGSC A4 / ATCC 38163 / CBS 112.46 / NRRL 194 / M139) (Aspergillus nidulans) protein is Phytase A.